A 945-amino-acid polypeptide reads, in one-letter code: Microtubule cross-linking factor 3 (945 aa).

Composition is skewed to low complexity over residues 1–23 (MSQP…AAAT), 72–93 (QQQL…TSGT), and 110–126 (PKGA…GAEG). Residues 1-25 (MSQPPSGGAAPAATSASAAAAATEA) form the signal peptide. 4 disordered regions span residues 1 to 250 (MSQP…SYWK), 265 to 293 (KERA…PVAG), 307 to 366 (SPMA…TLKN), and 494 to 522 (LSLK…DNED). Residues 141–151 (GQPEEAPREIE) are compositionally biased toward basic and acidic residues. The segment covering 164 to 179 (GGVGGGGEGGGAGGGP) has biased composition (gly residues). Residues 219-235 (TAATSKTPGPGSRNSGS) show a composition bias toward low complexity. Residues 236 to 247 (GSTGSGSGGGGS) are compositionally biased toward gly residues. Low complexity predominate over residues 328–345 (AMQAAAPPSSQPHSQQLQ). The stretch at 340-724 (HSQQLQEQED…GKVMQLQYEN (385 aa)) forms a coiled coil. Basic and acidic residues-rich tracts occupy residues 353 to 366 (EMEK…TLKN) and 494 to 511 (LSLK…EKKA). At Ser-567 the chain carries Phosphoserine. A disordered region spans residues 741–811 (GIRGSPRDSD…PWPKSFSDRQ (71 aa)). Over residues 745-766 (SPRDSDAESDAGKKESDDDSRP) the composition is skewed to basic and acidic residues. Ser-779 carries the post-translational modification Phosphoserine. Residues 809–833 (DRQQMKDIRSEAERLGKTIDRLIAD) adopt a coiled-coil conformation. A helical membrane pass occupies residues 913–933 (PIILLILILVLFSSLSYTTIF).

This sequence belongs to the MTCL family.

The protein resides in the membrane. The chain is Microtubule cross-linking factor 3 (Mtcl3) from Mus musculus (Mouse).